A 217-amino-acid chain; its full sequence is Trimethylamine corrinoid protein (217 aa).

The region spanning 1–92 (MANKEEIIAK…EMEKRKSQTK (92 aa)) is the B12-binding N-terminal domain. The B12-binding domain maps to 94-217 (LGTVAIGTIE…VAKVKAALNV (124 aa)). Residue H107 participates in methylcob(III)alamin binding.

Belongs to the methylamine corrinoid protein family. Can form a complex with MttB.

Its pathway is one-carbon metabolism; methanogenesis from trimethylamine. Its function is as follows. Acts probably as a methyl group carrier between MttB and either MtbA or MtaA. The chain is Trimethylamine corrinoid protein from Methanosarcina barkeri.